Consider the following 302-residue polypeptide: Forkhead box protein R2 (302 aa).

The segment at residues 183–285 is a DNA-binding region (fork-head); sequence RPPLNYSHLV…RVLAYARRES (103 aa).

It localises to the nucleus. The protein is Forkhead box protein R2 (Foxr2) of Mus musculus (Mouse).